We begin with the raw amino-acid sequence, 1043 residues long: Rho GTPase-activating protein gacZ (1043 aa).

Residues 1–44 (MTTTNTSIFGPRVNNSKFNNNNNNNNNNNNNNNNTSNNNNSNII) are disordered. Positions 14 to 44 (NNSKFNNNNNNNNNNNNNNNNTSNNNNSNII) are enriched in low complexity. Zn(2+)-binding residues include C71, C74, C82, C85, C91, H95, H103, and C107. The MYND-type; atypical zinc finger occupies 71-107 (CVICKSKNVQVCTGCLMVYYCGAEHQNIDWPNHKSLC). Disordered regions lie at residues 137 to 163 (SGNR…NNNN), 199 to 532 (HLQQ…NNSN), 546 to 594 (DGLS…NGNR), 614 to 690 (FYQS…TNNN), 706 to 772 (NTSQ…QLSA), and 801 to 842 (NKVS…NNNN). A compositionally biased stretch (low complexity) spans 201 to 225 (QQQIQQTQQTQQQPPPTTTSIPTQP). The span at 241-253 (SFKSSSSGDNTPI) shows a compositional bias: polar residues. Low complexity-rich tracts occupy residues 254 to 293 (NQSP…NMSG) and 307 to 411 (NSIN…TNEE). Residues 453–466 (GTLKQSSSSDSIYF) are compositionally biased toward polar residues. Low complexity-rich tracts occupy residues 467 to 532 (NNNN…NNSN) and 547 to 594 (GLSY…NGNR). The span at 615 to 625 (YQSNKNQSNGY) shows a compositional bias: polar residues. Residues 644 to 671 (ENDDSHEECDDDDDDDDGGGQDGDDGLD) are compositionally biased toward acidic residues. Low complexity-rich tracts occupy residues 726–736 (DTQSQSTNSTT), 752–771 (SSDD…SQLS), 801–821 (NKVS…NNNN), and 829–842 (NNNN…NNNN). Residues 825-852 (DHNENNNNNNNNINNNNNNNNNNIENII) adopt a coiled-coil conformation. Residues 855-1043 (IPLEEAVKKS…FGIQTYNYNS (189 aa)) enclose the Rho-GAP domain.

Its subcellular location is the cytoplasm. Rho GTPase-activating protein involved in the signal transduction pathway. The chain is Rho GTPase-activating protein gacZ (gacZ) from Dictyostelium discoideum (Social amoeba).